A 156-amino-acid chain; its full sequence is Small ribosomal subunit protein uS7 (156 aa).

It belongs to the universal ribosomal protein uS7 family. In terms of assembly, part of the 30S ribosomal subunit. Contacts proteins S9 and S11.

Its function is as follows. One of the primary rRNA binding proteins, it binds directly to 16S rRNA where it nucleates assembly of the head domain of the 30S subunit. Is located at the subunit interface close to the decoding center, probably blocks exit of the E-site tRNA. The protein is Small ribosomal subunit protein uS7 of Mycoplasma mobile (strain ATCC 43663 / 163K / NCTC 11711) (Mesomycoplasma mobile).